The following is a 174-amino-acid chain: RNA polymerase sigma factor CarQ (174 aa).

Positions 39–52 match the Polymerase core binding motif; sequence DLLQATFLSVIRSR. The interval 86-106 is disordered; that stretch reads YASREDTATPASAAPDDSDPS. Residues 136–155 constitute a DNA-binding region (H-T-H motif); it reads FEEIGALRGISPGAARLRAH.

Belongs to the sigma-70 factor family. ECF subfamily.

Functionally, sigma factors are initiation factors that promote the attachment of RNA polymerase to specific initiation sites and are then released. This sigma factor regulates genes for the light induced biosynthesis of carotenoids. The sequence is that of RNA polymerase sigma factor CarQ (carQ) from Myxococcus xanthus.